The sequence spans 1951 residues: MAQALLVPPGPESFRLFTRESLAAIEKRAAEEKAKKPKKEQDIDDENKPKPNSDLEAGKNLPFIYGDIPPEMVSEPLEDLDPYYVSKKTFVVLNKGKAIFRFSATSALYILTPLNPVRKIAIKILVHSLFSMLIMCTILTNCVFMTLSNPPDWTKNVEYTFTGIYTFESLIKILARGFCLEDFTFLRDPWNWLDFSVIVMAYVTEFVDLGNVSALRTFRVLRALKTISVIPGLKTIVGALIQSVKKLSDVMILTVFCLSVFALIGLQLFMGNLRNKCSQWPPSDSAFETNTTSYFNGTMDSNGTFVNVTMSTFNWKDYIADDSHFYVLDGQKDPLLCGNGSDAGQCPEGYICVKAGRNPNYGYTSFDTFSWAFLSLFRLMTQDYWENLYQLTLRAAGKTYMIFFVLVIFLGSFYLVNLILAVVAMAYEEQNQATLEEAEQKEAEFQQMLEQLKKQQEEAQAVAAASAASRDFSGIGGLGELLESSSEASKLSSKSAKEWRNRRKKRRQREHLEGNHRADGDRFPKSESEDSVKRRSFLLSLDGNPLTGDKKLCSPHQSLLSIRGSLFSPRRNSKTSIFSFRGRAKDVGSENDFADDEHSTFEDSESRRDSLFVPHRPGERRNSNGTTTETEVRKRRLSSYQISMEMLEDSSGRQRSMSIASILTNTMEELEESRQKCPPCWYRFANVFLIWDCCDAWLKVKHLVNLIVMDPFVDLAITICIVLNTLFMAMEHYPMTQQFSSVLTVGNLVFTGIFTAEMVLKIIAMDPYYYFQEGWNIFDGIIVSLSLMELGLANVEGLSVLRSFRLLRVFKLAKSWPTLNMLIKIIGNSVGALGNLTLVLAIIVFIFAVVGMQLFGKSYKECVCKINVDCKLPRWHMNDFFHSFLIVFRVLCGEWIETMWDCMEVAGQTMCLIVFMLVMVIGNLVVLNLFLALLLSSFSSDNLAATDDDNEMNNLQIAVGRMQKGIDFVKNKIRECFRKAFFRKPKVIEIQEGNKIDSCMSNNTGIEISKELNYLKDGNGTTSGVGTGSSVEKYVIDENDYMSFINNPSLTVTVPIAVGESDFENLNTEEFSSESELEESKEKLNATSSSEGSTVDVAPPREGEQAEIEPEEDLKPEACFTEGCIKKFPFCQVSTEEGKGKIWWNLRKTCYSIVEHNWFETFIVFMILLSSGALAFEDIYIEQRKTIKTMLEYADKVFTYIFILEMLLKWVAYGFQTYFTNAWCWLDFLIVDVSLVSLVANALGYSELGAIKSLRTLRALRPLRALSRFEGMRVVVNALVGAIPSIMNVLLVCLIFWLIFSIMGVNLFAGKFYHCVNTTTGNMFEIKEVNNFSDCQALGKQARWKNVKVNFDNVGAGYLALLQVATFKGWMDIMYAAVDSRDVKLQPIYEENLYMYLYFVIFIIFGSFFTLNLFIGVIIDNFNQQKKKFGGQDIFMTEEQKKYYNAMKKLGSKKPQKPIPRPANKFQGMVFDFVTRQVFDISIMILICLNMVTMMVETDDQSKYMTLVLSRINLVFIVLFTGEFLLKLISLRYYYFTIGWNIFDFVVVILSIVGMFLAELIEKYFVSPTLFRVIRLARIGRILRLIKGAKGIRTLLFALMMSLPALFNIGLLLFLVMFIYAIFGMSNFAYVKKEAGIDDMFNFETFGNSMICLFQITTSAGWDGLLAPILNSAPPDCDPDAIHPGSSVKGDCGNPSVGIFFFVSYIIISFLVVVNMYIAVILENFSVATEESAEPLSEDDFEMFYEVWEKFDPDATQFIEFCKLSDFAAALDPPLLIAKPNKVQLIAMDLPMVSGDRIHCLDILFAFTKRVLGESGEMDALRIQMEDRFMASNPSKVSYEPITTTLKRKQEEVSAAIIQRNYRCYLLKQRLKNISSKYDKETIKGRIDLPIKGDMVIDKLNGNSTPEKTDGSSSTTSPPSYDSVTKPDKEKFEKDKPEKEIKGKEVRENQK.

The Cytoplasmic portion of the chain corresponds to 1-128; that stretch reads MAQALLVPPG…KIAIKILVHS (128 aa). The tract at residues 28-60 is disordered; that stretch reads RAAEEKAKKPKKEQDIDDENKPKPNSDLEAGKN. Over residues 46–57 the composition is skewed to basic and acidic residues; the sequence is ENKPKPNSDLEA. An I repeat occupies 110–455; it reads ILTPLNPVRK…QQMLEQLKKQ (346 aa). A helical membrane pass occupies residues 129 to 146; it reads LFSMLIMCTILTNCVFMT. Topologically, residues 147 to 152 are extracellular; sequence LSNPPD. Residues 153-174 form a helical membrane-spanning segment; sequence WTKNVEYTFTGIYTFESLIKIL. Residues 175–188 lie on the Cytoplasmic side of the membrane; the sequence is ARGFCLEDFTFLRD. A helical transmembrane segment spans residues 189 to 206; the sequence is PWNWLDFSVIVMAYVTEF. The Extracellular portion of the chain corresponds to 207 to 213; sequence VDLGNVS. A glycan (N-linked (GlcNAc...) asparagine) is linked at Asn211. A helical membrane pass occupies residues 214 to 235; that stretch reads ALRTFRVLRALKTISVIPGLKT. The Cytoplasmic portion of the chain corresponds to 236-249; the sequence is IVGALIQSVKKLSD. A helical transmembrane segment spans residues 250–269; the sequence is VMILTVFCLSVFALIGLQLF. At 270–369 the chain is on the extracellular side; it reads MGNLRNKCSQ…NYGYTSFDTF (100 aa). Residues Asn290, Asn296, Asn302, Asn307, and Asn339 are each glycosylated (N-linked (GlcNAc...) asparagine). An intramembrane region (pore-forming) is located at residues 370–386; that stretch reads SWAFLSLFRLMTQDYWE. Residues 387 to 397 are Extracellular-facing; that stretch reads NLYQLTLRAAG. Residues 398-424 traverse the membrane as a helical segment; that stretch reads KTYMIFFVLVIFLGSFYLVNLILAVVA. At 425 to 712 the chain is on the cytoplasmic side; the sequence is MAYEEQNQAT…LVNLIVMDPF (288 aa). Phosphoserine is present on residues Ser484, Ser485, and Ser486. 2 disordered regions span residues 493–529 and 587–633; these read SKSAKEWRNRRKKRRQREHLEGNHRADGDRFPKSESE and VGSE…TEVR. Over residues 500–509 the composition is skewed to basic residues; sequence RNRRKKRRQR. Composition is skewed to basic and acidic residues over residues 510-529 and 596-622; these read EHLEGNHRADGDRFPKSESE and DEHSTFEDSESRRDSLFVPHRPGERRN. An II repeat occupies 693-965; it reads CCDAWLKVKH…QIAVGRMQKG (273 aa). Residues 713-730 traverse the membrane as a helical segment; it reads VDLAITICIVLNTLFMAM. The Extracellular segment spans residues 731-738; that stretch reads EHYPMTQQ. The helical transmembrane segment at 739 to 763 threads the bilayer; the sequence is FSSVLTVGNLVFTGIFTAEMVLKII. Residues 764–773 lie on the Cytoplasmic side of the membrane; the sequence is AMDPYYYFQE. The chain crosses the membrane as a helical span at residues 774–793; that stretch reads GWNIFDGIIVSLSLMELGLA. The Extracellular portion of the chain corresponds to 794 to 797; the sequence is NVEG. Residues 798-816 form a helical membrane-spanning segment; the sequence is LSVLRSFRLLRVFKLAKSW. The Cytoplasmic portion of the chain corresponds to 817–834; sequence PTLNMLIKIIGNSVGALG. Residues 835 to 855 form a helical membrane-spanning segment; that stretch reads NLTLVLAIIVFIFAVVGMQLF. Residues 856–880 lie on the Extracellular side of the membrane; the sequence is GKSYKECVCKINVDCKLPRWHMNDF. A disulfide bridge connects residues Cys864 and Cys870. Residues 881-896 constitute an intramembrane region (pore-forming); sequence FHSFLIVFRVLCGEWI. At 897-907 the chain is on the extracellular side; that stretch reads ETMWDCMEVAG. Cys902 and Cys911 are joined by a disulfide. A helical transmembrane segment spans residues 908-934; sequence QTMCLIVFMLVMVIGNLVVLNLFLALL. The Cytoplasmic portion of the chain corresponds to 935–1156; that stretch reads LSSFSSDNLA…RKTCYSIVEH (222 aa). A disordered region spans residues 1068–1112; that stretch reads TEEFSSESELEESKEKLNATSSSEGSTVDVAPPREGEQAEIEPEE. The stretch at 1139–1450 is one III repeat; it reads KGKIWWNLRK…KKYYNAMKKL (312 aa). A helical membrane pass occupies residues 1157–1177; the sequence is NWFETFIVFMILLSSGALAFE. Residues 1178-1189 are Extracellular-facing; the sequence is DIYIEQRKTIKT. Residues 1190–1211 traverse the membrane as a helical segment; the sequence is MLEYADKVFTYIFILEMLLKWV. The Cytoplasmic segment spans residues 1212-1217; that stretch reads AYGFQT. The chain crosses the membrane as a helical span at residues 1218–1243; it reads YFTNAWCWLDFLIVDVSLVSLVANAL. Residues 1244–1252 lie on the Extracellular side of the membrane; that stretch reads GYSELGAIK. The helical transmembrane segment at 1253 to 1271 threads the bilayer; it reads SLRTLRALRPLRALSRFEG. Residues 1272–1284 are Cytoplasmic-facing; the sequence is MRVVVNALVGAIP. The chain crosses the membrane as a helical span at residues 1285–1307; that stretch reads SIMNVLLVCLIFWLIFSIMGVNL. The Extracellular portion of the chain corresponds to 1308–1353; it reads FAGKFYHCVNTTTGNMFEIKEVNNFSDCQALGKQARWKNVKVNFDN. A disulfide bridge links Cys1315 with Cys1335. N-linked (GlcNAc...) asparagine glycosylation is found at Asn1317 and Asn1331. Positions 1354–1370 form an intramembrane region, pore-forming; it reads VGAGYLALLQVATFKGW. At 1371–1393 the chain is on the extracellular side; sequence MDIMYAAVDSRDVKLQPIYEENL. A helical membrane pass occupies residues 1394–1419; that stretch reads YMYLYFVIFIIFGSFFTLNLFIGVII. Over 1420-1477 the chain is Cytoplasmic; that stretch reads DNFNQQKKKFGGQDIFMTEEQKKYYNAMKKLGSKKPQKPIPRPANKFQGMVFDFVTRQ. At Ser1452 the chain carries Phosphoserine; by PKC. The IV repeat unit spans residues 1459 to 1757; sequence IPRPANKFQG…WEKFDPDATQ (299 aa). A helical transmembrane segment spans residues 1478–1496; the sequence is VFDISIMILICLNMVTMMV. The Extracellular portion of the chain corresponds to 1497 to 1504; that stretch reads ETDDQSKY. A helical transmembrane segment spans residues 1505–1528; the sequence is MTLVLSRINLVFIVLFTGEFLLKL. The Cytoplasmic portion of the chain corresponds to 1529-1538; that stretch reads ISLRYYYFTI. Residues 1539-1556 traverse the membrane as a helical segment; the sequence is GWNIFDFVVVILSIVGMF. Topologically, residues 1557-1568 are extracellular; that stretch reads LAELIEKYFVSP. Residues 1569 to 1591 traverse the membrane as a helical segment; it reads TLFRVIRLARIGRILRLIKGAKG. Over 1592 to 1604 the chain is Cytoplasmic; that stretch reads IRTLLFALMMSLP. A helical membrane pass occupies residues 1605 to 1628; it reads ALFNIGLLLFLVMFIYAIFGMSNF. Residues 1629 to 1650 lie on the Extracellular side of the membrane; the sequence is AYVKKEAGIDDMFNFETFGNSM. Residues 1651-1663 constitute an intramembrane region (pore-forming); the sequence is ICLFQITTSAGWD. Topologically, residues 1664-1695 are extracellular; that stretch reads GLLAPILNSAPPDCDPDAIHPGSSVKGDCGNP. A helical transmembrane segment spans residues 1696 to 1721; sequence SVGIFFFVSYIIISFLVVVNMYIAVI. Residues 1722–1951 lie on the Cytoplasmic side of the membrane; sequence LENFSVATEE…KGKEVRENQK (230 aa). The IQ domain maps to 1851–1880; sequence EEVSAAIIQRNYRCYLLKQRLKNISSKYDK. Residues 1898-1951 are disordered; the sequence is DKLNGNSTPEKTDGSSSTTSPPSYDSVTKPDKEKFEKDKPEKEIKGKEVRENQK. Basic and acidic residues predominate over residues 1925 to 1951; the sequence is TKPDKEKFEKDKPEKEIKGKEVRENQK.

The protein belongs to the sodium channel (TC 1.A.1.10) family. Nav1.3/SCN3A subfamily. Heterooligomer of an alpha subunit, SCN3A, and 1 to 3 regulatory beta subunits including SCN1B and SCN2B; disulfide-linked with some beta subunits like SCN2B. Interacts with NEDD4L; could regulate expression of SCN3A at the plasma membrane through ubiquitination-regulated endocytosis. Interacts with the conotoxin GVIIJ. Interacts with the spider beta/delta-theraphotoxin-Pre1a. Interacts with the spider RTX-VII toxin (AC P0DL75). Post-translationally, may be ubiquitinated by NEDD4L; which would promote its endocytosis. Phosphorylation at Ser-1452 by PKC in a highly conserved cytoplasmic loop slows inactivation of the sodium channel and reduces peak sodium currents.

It is found in the cell membrane. Its subcellular location is the basal cell membrane. The enzyme catalyses Na(+)(in) = Na(+)(out). Pore-forming subunit of Nav1.3, a voltage-gated sodium (Nav) channel that directly mediates the depolarizing phase of action potentials in excitable membranes. Navs, also called VGSCs (voltage-gated sodium channels) or VDSCs (voltage-dependent sodium channels), operate by switching between closed and open conformations depending on the voltage difference across the membrane. In the open conformation they allow Na(+) ions to selectively pass through the pore, along their electrochemical gradient. The influx of Na+ ions provokes membrane depolarization, initiating the propagation of electrical signals throughout cells and tissues. In some secretory cell types, it also participates in cell excitability through membrane depolarization and regulates cells responsiveness to stimuli triggering secretion. For instance, it controls the release of serotonin/5-hydroxytryptamine by enterochromaffin cells and is required for both glucagon- and glucose-induced insulin secretion in pancreatic endocrine cells. In Rattus norvegicus (Rat), this protein is Sodium channel protein type 3 subunit alpha.